Here is an 805-residue protein sequence, read N- to C-terminus: Phenylalanine--tRNA ligase beta subunit (805 aa).

In terms of domain architecture, tRNA-binding spans 39-148; the sequence is APPFTGVVVA…AALRPGTDIR (110 aa). One can recognise a B5 domain in the interval 399-474; that stretch reads PVREPVRMRL…RVYGFERIPD (76 aa). Mg(2+)-binding residues include D452, D458, E461, and E462. One can recognise an FDX-ACB domain in the interval 703–804; it reads SRQPAVVRDL…LVAAHNARQR (102 aa).

This sequence belongs to the phenylalanyl-tRNA synthetase beta subunit family. Type 1 subfamily. In terms of assembly, tetramer of two alpha and two beta subunits. Mg(2+) serves as cofactor.

It is found in the cytoplasm. The catalysed reaction is tRNA(Phe) + L-phenylalanine + ATP = L-phenylalanyl-tRNA(Phe) + AMP + diphosphate + H(+). The chain is Phenylalanine--tRNA ligase beta subunit from Bordetella parapertussis (strain 12822 / ATCC BAA-587 / NCTC 13253).